The primary structure comprises 191 residues: Peptide methionine sulfoxide reductase MsrA (191 aa).

Residue Cys-21 is part of the active site.

Belongs to the MsrA Met sulfoxide reductase family.

The catalysed reaction is L-methionyl-[protein] + [thioredoxin]-disulfide + H2O = L-methionyl-(S)-S-oxide-[protein] + [thioredoxin]-dithiol. It carries out the reaction [thioredoxin]-disulfide + L-methionine + H2O = L-methionine (S)-S-oxide + [thioredoxin]-dithiol. Its function is as follows. Has an important function as a repair enzyme for proteins that have been inactivated by oxidation. Catalyzes the reversible oxidation-reduction of methionine sulfoxide in proteins to methionine. This Ralstonia nicotianae (strain ATCC BAA-1114 / GMI1000) (Ralstonia solanacearum) protein is Peptide methionine sulfoxide reductase MsrA.